Reading from the N-terminus, the 425-residue chain is Tyrosine--tRNA ligase (425 aa).

Residue tyrosine 33 participates in L-tyrosine binding. The 'HIGH' region motif lies at 38 to 47 (PTADSLHLGN). Residues tyrosine 170 and glutamine 174 each coordinate L-tyrosine. The 'KMSKS' region motif lies at 230–234 (KFGKS). Lysine 233 provides a ligand contact to ATP. An S4 RNA-binding domain is found at 356-422 (KKLIDLLVET…GKKNKMIIRL (67 aa)).

The protein belongs to the class-I aminoacyl-tRNA synthetase family. TyrS type 1 subfamily. In terms of assembly, homodimer.

The protein localises to the cytoplasm. The enzyme catalyses tRNA(Tyr) + L-tyrosine + ATP = L-tyrosyl-tRNA(Tyr) + AMP + diphosphate + H(+). In terms of biological role, catalyzes the attachment of tyrosine to tRNA(Tyr) in a two-step reaction: tyrosine is first activated by ATP to form Tyr-AMP and then transferred to the acceptor end of tRNA(Tyr). In Protochlamydia amoebophila (strain UWE25), this protein is Tyrosine--tRNA ligase.